A 415-amino-acid polypeptide reads, in one-letter code: 3-isopropylmalate dehydratase large subunit (415 aa).

The [4Fe-4S] cluster site is built by Cys295, Cys353, and Cys356.

It belongs to the aconitase/IPM isomerase family. LeuC type 2 subfamily. In terms of assembly, heterodimer of LeuC and LeuD. [4Fe-4S] cluster serves as cofactor.

The enzyme catalyses (2R,3S)-3-isopropylmalate = (2S)-2-isopropylmalate. The protein operates within amino-acid biosynthesis; L-leucine biosynthesis; L-leucine from 3-methyl-2-oxobutanoate: step 2/4. Catalyzes the isomerization between 2-isopropylmalate and 3-isopropylmalate, via the formation of 2-isopropylmaleate. This is 3-isopropylmalate dehydratase large subunit from Pyrobaculum arsenaticum (strain DSM 13514 / JCM 11321 / PZ6).